A 273-amino-acid chain; its full sequence is Putative pyruvate, phosphate dikinase regulatory protein (273 aa).

149 to 156 serves as a coordination point for ADP; the sequence is GPSRTSKT.

This sequence belongs to the pyruvate, phosphate/water dikinase regulatory protein family. PDRP subfamily.

It carries out the reaction N(tele)-phospho-L-histidyl/L-threonyl-[pyruvate, phosphate dikinase] + ADP = N(tele)-phospho-L-histidyl/O-phospho-L-threonyl-[pyruvate, phosphate dikinase] + AMP + H(+). It catalyses the reaction N(tele)-phospho-L-histidyl/O-phospho-L-threonyl-[pyruvate, phosphate dikinase] + phosphate + H(+) = N(tele)-phospho-L-histidyl/L-threonyl-[pyruvate, phosphate dikinase] + diphosphate. Functionally, bifunctional serine/threonine kinase and phosphorylase involved in the regulation of the pyruvate, phosphate dikinase (PPDK) by catalyzing its phosphorylation/dephosphorylation. The protein is Putative pyruvate, phosphate dikinase regulatory protein of Rickettsia conorii (strain ATCC VR-613 / Malish 7).